Consider the following 603-residue polypeptide: Phosphoribosylformylglycinamidine synthase subunit PurL (603 aa).

H32 is a catalytic residue. ATP is bound by residues Y35 and K68. E70 contacts Mg(2+). Substrate contacts are provided by residues 71 to 74 and R93; that span reads SHNH. H72 (proton acceptor) is an active-site residue. D94 contributes to the Mg(2+) binding site. ATP-binding positions include D107 and 136–139; that span reads GELR. 2 residues coordinate substrate: G189 and Q208. D236 is a Mg(2+) binding site. Substrate is bound at residue 280–282; sequence ESQ. Positions 388, 429, 442, and 477 each coordinate ATP. N478 contacts Mg(2+). Position 480 (S480) interacts with substrate. ATP is bound by residues S549 and H556.

The protein belongs to the FGAMS family. In terms of assembly, monomer. Part of the FGAM synthase complex composed of 1 PurL, 1 PurQ and 2 PurS subunits.

It is found in the cytoplasm. It carries out the reaction N(2)-formyl-N(1)-(5-phospho-beta-D-ribosyl)glycinamide + L-glutamine + ATP + H2O = 2-formamido-N(1)-(5-O-phospho-beta-D-ribosyl)acetamidine + L-glutamate + ADP + phosphate + H(+). Its pathway is purine metabolism; IMP biosynthesis via de novo pathway; 5-amino-1-(5-phospho-D-ribosyl)imidazole from N(2)-formyl-N(1)-(5-phospho-D-ribosyl)glycinamide: step 1/2. Functionally, part of the phosphoribosylformylglycinamidine synthase complex involved in the purines biosynthetic pathway. Catalyzes the ATP-dependent conversion of formylglycinamide ribonucleotide (FGAR) and glutamine to yield formylglycinamidine ribonucleotide (FGAM) and glutamate. The FGAM synthase complex is composed of three subunits. PurQ produces an ammonia molecule by converting glutamine to glutamate. PurL transfers the ammonia molecule to FGAR to form FGAM in an ATP-dependent manner. PurS interacts with PurQ and PurL and is thought to assist in the transfer of the ammonia molecule from PurQ to PurL. The chain is Phosphoribosylformylglycinamidine synthase subunit PurL from Thermotoga maritima (strain ATCC 43589 / DSM 3109 / JCM 10099 / NBRC 100826 / MSB8).